Here is a 243-residue protein sequence, read N- to C-terminus: Ribonuclease 3 (243 aa).

The 137-residue stretch at 10–146 (VNRFRKRFDT…FIGALYLDQG (137 aa)) folds into the RNase III domain. Mg(2+) is bound at residue Glu-59. Asp-63 is an active-site residue. Mg(2+) contacts are provided by Asp-132 and Glu-135. The active site involves Glu-135. A DRBM domain is found at 172-241 (DFKTQFQEYV…AESAYKQLKQ (70 aa)). Residues 219 to 231 (GKGKTKKESEQRA) are compositionally biased toward basic and acidic residues. The disordered stretch occupies residues 219-243 (GKGKTKKESEQRAAESAYKQLKQIK).

Belongs to the ribonuclease III family. As to quaternary structure, homodimer. Requires Mg(2+) as cofactor.

It is found in the cytoplasm. It catalyses the reaction Endonucleolytic cleavage to 5'-phosphomonoester.. Digests double-stranded RNA. Involved in the processing of primary rRNA transcript to yield the immediate precursors to the large and small rRNAs (23S and 16S). Processes some mRNAs, and tRNAs when they are encoded in the rRNA operon. Processes pre-crRNA and tracrRNA of type II CRISPR loci if present in the organism. The chain is Ribonuclease 3 from Staphylococcus aureus (strain USA300).